The sequence spans 460 residues: Argininosuccinate lyase (460 aa).

This sequence belongs to the lyase 1 family. Argininosuccinate lyase subfamily.

The protein localises to the cytoplasm. It catalyses the reaction 2-(N(omega)-L-arginino)succinate = fumarate + L-arginine. The protein operates within amino-acid biosynthesis; L-arginine biosynthesis; L-arginine from L-ornithine and carbamoyl phosphate: step 3/3. The sequence is that of Argininosuccinate lyase from Edwardsiella ictaluri (strain 93-146).